Consider the following 901-residue polypeptide: Protein translocase subunit SecA (901 aa).

Residues Gln85, 103–107, and Asp510 contribute to the ATP site; that span reads GEGKT. Positions 848-901 are disordered; sequence RINQNNLPVDENSQTTQNSETEDYSDRRIGRNEPCPCGSGKKYKHCHGSRVARQ. Positions 849–866 are enriched in polar residues; that stretch reads INQNNLPVDENSQTTQNS. Residues Cys882, Cys884, Cys893, and His894 each contribute to the Zn(2+) site. Basic residues predominate over residues 888 to 901; it reads KKYKHCHGSRVARQ.

The protein belongs to the SecA family. As to quaternary structure, monomer and homodimer. Part of the essential Sec protein translocation apparatus which comprises SecA, SecYEG and auxiliary proteins SecDF-YajC and YidC. Forms a complex with SecB. Zn(2+) serves as cofactor.

The protein localises to the cell inner membrane. The protein resides in the cytoplasm. It carries out the reaction ATP + H2O + cellular proteinSide 1 = ADP + phosphate + cellular proteinSide 2.. Functionally, part of the Sec protein translocase complex. Interacts with the SecYEG preprotein conducting channel. Has a central role in coupling the hydrolysis of ATP to the transfer of proteins into and across the cell membrane, serving both as a receptor for the preprotein-SecB complex and as an ATP-driven molecular motor driving the stepwise translocation of polypeptide chains across the membrane. The polypeptide is Protein translocase subunit SecA (Haemophilus influenzae (strain ATCC 51907 / DSM 11121 / KW20 / Rd)).